A 276-amino-acid polypeptide reads, in one-letter code: Nickel import system permease protein NikC (276 aa).

A run of 5 helical transmembrane segments spans residues 10–30 (LIFFVFVAFIFVVIVLQFFVS), 73–93 (LFVTVLTLIAIVVIGVTLGLF), 108–128 (FIDVGLSIPEFIIMIALASFF), 186–206 (IIPAIIVLMVVDFGKIILYIS), and 238–258 (IMLIAPASVIAITILIFNLTG). The region spanning 69–258 (ARSTLFVTVL…ITILIFNLTG (190 aa)) is the ABC transmembrane type-1 domain.

It belongs to the binding-protein-dependent transport system permease family. OppBC subfamily. As to quaternary structure, the complex is composed of two ATP-binding proteins (NikD and NikE), two transmembrane proteins (NikB and NikC) and a solute-binding protein (NikA).

Its subcellular location is the cell membrane. Its function is as follows. Part of the ABC transporter complex NikABCDE (Opp2) involved in nickel import. Probably responsible for the translocation of the substrate across the membrane. This is Nickel import system permease protein NikC from Staphylococcus aureus (strain USA300).